The sequence spans 160 residues: S-protein homolog 13 (160 aa).

Positions 1-27 (MGRDLGWCFFVATVLLAAVLLPAPTIA) are cleaved as a signal peptide.

Belongs to the plant self-incompatibility (S1) protein family.

Its subcellular location is the secreted. This is S-protein homolog 13 from Arabidopsis thaliana (Mouse-ear cress).